Reading from the N-terminus, the 149-residue chain is D-aminoacyl-tRNA deacylase (149 aa).

The Gly-cisPro motif, important for rejection of L-amino acids signature appears at 137-138; sequence GP.

Belongs to the DTD family. As to quaternary structure, homodimer.

The protein localises to the cytoplasm. It carries out the reaction glycyl-tRNA(Ala) + H2O = tRNA(Ala) + glycine + H(+). It catalyses the reaction a D-aminoacyl-tRNA + H2O = a tRNA + a D-alpha-amino acid + H(+). Functionally, an aminoacyl-tRNA editing enzyme that deacylates mischarged D-aminoacyl-tRNAs. Also deacylates mischarged glycyl-tRNA(Ala), protecting cells against glycine mischarging by AlaRS. Acts via tRNA-based rather than protein-based catalysis; rejects L-amino acids rather than detecting D-amino acids in the active site. By recycling D-aminoacyl-tRNA to D-amino acids and free tRNA molecules, this enzyme counteracts the toxicity associated with the formation of D-aminoacyl-tRNA entities in vivo and helps enforce protein L-homochirality. This is D-aminoacyl-tRNA deacylase from Clostridium botulinum (strain ATCC 19397 / Type A).